The sequence spans 1008 residues: Ubiquitin carboxyl-terminal hydrolase 16 (1008 aa).

Residues 7-27 form a helical membrane-spanning segment; it reads LGISSLVLVVSLVLPLIGLFV. Zn(2+)-binding residues include C74, C77, C85, C88, C94, C98, H107, and C111. The segment at 74–111 adopts an MYND-type zinc-finger fold; that stretch reads CPVCYCLATTRCSRCKAVRYCSGKCQIIHWRQGHKDEC. Disordered regions lie at residues 122-149, 159-178, 187-233, 275-309, and 326-379; these read DESD…GPEP, LSNR…DNKD, VSVA…LDAH, SVHK…DPSL, and SDSC…YISD. Residues 193 to 203 show a composition bias toward low complexity; sequence SGSSFSGFSSS. Residues 222–233 are compositionally biased toward basic and acidic residues; the sequence is ESERSESLLDAH. Positions 284-295 are enriched in polar residues; that stretch reads GQNQSQSRSLHS. Over residues 340 to 351 the composition is skewed to low complexity; sequence SSLHFSFGSGSS. Residues 542 to 847 enclose the USP domain; it reads CGLINVGNSC…GAYMLFYARC (306 aa). The active-site Nucleophile is C551. The active-site Proton acceptor is H807. Disordered stretches follow at residues 859–905 and 952–1008; these read KTEA…GNIQ and FIFG…GGER. 2 stretches are compositionally biased toward low complexity: residues 878-888 and 965-992; these read STISRSVSTSS and SETP…RSSP.

It belongs to the peptidase C19 family. As to quaternary structure, interacts with SHM1 and SHM4. Interacts with HIPP27. As to expression, expressed in flowers, siliques, rosette leaves, cauline leaves, stems and at a lower level in roots. In roots, expressed in the sieve elements.

The protein localises to the membrane. It catalyses the reaction Thiol-dependent hydrolysis of ester, thioester, amide, peptide and isopeptide bonds formed by the C-terminal Gly of ubiquitin (a 76-residue protein attached to proteins as an intracellular targeting signal).. In terms of biological role, recognizes and hydrolyzes the peptide bond at the C-terminal Gly of ubiquitin. Involved in the processing of poly-ubiquitin precursors as well as that of ubiquitinated proteins. Involved in salt tolerance by modulating sodium transport activity and repressing cell death at least partially through modulating SHM1 stability and activity. Involved in cadmium tolerance by interacting with HIPP27 and probably modulating its stability. This chain is Ubiquitin carboxyl-terminal hydrolase 16 (UBP16), found in Arabidopsis thaliana (Mouse-ear cress).